The following is a 448-amino-acid chain: Argininosuccinate synthase (448 aa).

ATP-binding positions include 17 to 25 and A43; that span reads AFSGGLDTS. L-citrulline is bound at residue Y99. Positions 129 and 131 each coordinate ATP. The L-aspartate site is built by T131, N135, and D136. N135 is a binding site for L-citrulline. Residue D136 coordinates ATP. L-citrulline-binding residues include R139 and S192. D194 is a binding site for ATP. The L-citrulline site is built by T201, E203, and E280.

This sequence belongs to the argininosuccinate synthase family. Type 2 subfamily. Homotetramer.

It localises to the cytoplasm. The enzyme catalyses L-citrulline + L-aspartate + ATP = 2-(N(omega)-L-arginino)succinate + AMP + diphosphate + H(+). The protein operates within amino-acid biosynthesis; L-arginine biosynthesis; L-arginine from L-ornithine and carbamoyl phosphate: step 2/3. The sequence is that of Argininosuccinate synthase from Enterobacter sp. (strain 638).